A 192-amino-acid chain; its full sequence is MKKRLLGIALGSLLFTTGSAVAADYKIDKEGQHAFVNFRIQHLGYSWLYGTFKDFDGSFTFDEKNPAADKVNVTINTNSLDTNHAERDKHLRSAEFLNVAKFPQATFASTEVKKDGEDLDITGNLTLNGVTKPVTLEAKLIGQGDDPWGGKRAGFEASGKIRLKDFNITTDLGPASQEVDLIISVEGVQQKS.

Positions methionine 1–alanine 22 are cleaved as a signal peptide.

It belongs to the UPF0312 family. Type 1 subfamily.

The protein localises to the periplasm. The polypeptide is UPF0312 protein Ent638_1570 (Enterobacter sp. (strain 638)).